Reading from the N-terminus, the 131-residue chain is Heterochromatin silencing protein rss1 (131 aa).

Monomer.

It is found in the cytoplasm. The protein localises to the nucleus. Functionally, required for heterochromatin silencing within pericentromeric repeats and at telomers. Facilitates the recruitment of Clr6 histone deacetylase (HDAC) by interacting with histones. Also interacts with Rad25, which mediates heterochromatin silencing in DNA repeats by recruiting the RITS complex. Together with Rad25, forms a regulatory hub that defines heterochromatin silencing within tandem repeats via linking RNAi and HDAC. The polypeptide is Heterochromatin silencing protein rss1 (rss1) (Schizosaccharomyces pombe (strain 972 / ATCC 24843) (Fission yeast)).